Here is a 116-residue protein sequence, read N- to C-terminus: Flagellar transcriptional regulator FlhD (116 aa).

The protein belongs to the FlhD family. As to quaternary structure, homodimer; disulfide-linked. Forms a heterohexamer composed of two FlhC and four FlhD subunits. Each FlhC binds a FlhD dimer, forming a heterotrimer, and a hexamer assembles by dimerization of two heterotrimers.

It localises to the cytoplasm. Functions in complex with FlhC as a master transcriptional regulator that regulates transcription of several flagellar and non-flagellar operons by binding to their promoter region. Activates expression of class 2 flagellar genes, including fliA, which is a flagellum-specific sigma factor that turns on the class 3 genes. Also regulates genes whose products function in a variety of physiological pathways. The polypeptide is Flagellar transcriptional regulator FlhD (Proteus mirabilis (strain HI4320)).